A 211-amino-acid chain; its full sequence is N-(5'-phosphoribosyl)anthranilate isomerase (211 aa).

The protein belongs to the TrpF family.

It carries out the reaction N-(5-phospho-beta-D-ribosyl)anthranilate = 1-(2-carboxyphenylamino)-1-deoxy-D-ribulose 5-phosphate. It functions in the pathway amino-acid biosynthesis; L-tryptophan biosynthesis; L-tryptophan from chorismate: step 3/5. In Pseudomonas aeruginosa (strain UCBPP-PA14), this protein is N-(5'-phosphoribosyl)anthranilate isomerase.